Consider the following 242-residue polypeptide: Endoglucanase-5 (242 aa).

Residues Met-1–Ala-17 form the signal peptide. The interval Tyr-18 to Asn-182 is catalytic. Asp-27 functions as the Nucleophile in the catalytic mechanism. Residue Asp-134 is the Proton donor of the active site. Residues Thr-177–Gln-206 are disordered. Residue Asn-182 is glycosylated (N-linked (GlcNAc...) asparagine). Residues Thr-184–Pro-201 are compositionally biased toward low complexity. A CBM1 domain is found at Gly-205 to Leu-241. Intrachain disulfides connect Cys-213–Cys-230 and Cys-224–Cys-240.

It belongs to the glycosyl hydrolase 45 (cellulase K) family.

It catalyses the reaction Endohydrolysis of (1-&gt;4)-beta-D-glucosidic linkages in cellulose, lichenin and cereal beta-D-glucans.. In Hypocrea jecorina (Trichoderma reesei), this protein is Endoglucanase-5 (egl5).